The sequence spans 328 residues: Beta-ketoacyl-[acyl-carrier-protein] synthase III (328 aa).

Residues Cys-113 and His-253 contribute to the active site. The ACP-binding stretch occupies residues 254 to 258 (QANLR). Asn-283 is an active-site residue.

This sequence belongs to the thiolase-like superfamily. FabH family. As to quaternary structure, homodimer.

It is found in the cytoplasm. The catalysed reaction is malonyl-[ACP] + acetyl-CoA + H(+) = 3-oxobutanoyl-[ACP] + CO2 + CoA. Its pathway is lipid metabolism; fatty acid biosynthesis. Catalyzes the condensation reaction of fatty acid synthesis by the addition to an acyl acceptor of two carbons from malonyl-ACP. Catalyzes the first condensation reaction which initiates fatty acid synthesis and may therefore play a role in governing the total rate of fatty acid production. Possesses both acetoacetyl-ACP synthase and acetyl transacylase activities. Its substrate specificity determines the biosynthesis of branched-chain and/or straight-chain of fatty acids. The sequence is that of Beta-ketoacyl-[acyl-carrier-protein] synthase III from Fusobacterium nucleatum subsp. nucleatum (strain ATCC 25586 / DSM 15643 / BCRC 10681 / CIP 101130 / JCM 8532 / KCTC 2640 / LMG 13131 / VPI 4355).